The sequence spans 306 residues: Methyl-CpG-binding domain-containing protein 7 (306 aa).

A compositionally biased stretch (polar residues) spans 1–11 (MQTRSSSSPSA). The interval 1–21 (MQTRSSSSPSANHRRETQLQI) is disordered. MBD domains are found at residues 21-92 (IADP…QDKT), 106-171 (GVEY…RVLQ), and 172-242 (NRRG…ERLP). Residues Arg-118, Arg-145, and Arg-174 each carry the asymmetric dimethylarginine modification. The tract at residues 163-306 (IEQQLRVLQN…AFVSLIEDRS (144 aa)) is required for interaction with PRMT11.

Interacts with PRMT11. Interacts (via C-terminus) with IDM2, but not with IDM1. Interacts with IDM3. Part of a complex made of MBD7, IDM1, IDM2 and IDM3. Post-translationally, methylated by PRMT11. Expressed in leaves, buds, flowers, stems, siliques, mature seeds and roots.

The protein localises to the nucleus. The protein resides in the chromosome. In terms of biological role, transcriptional regulator that binds CpG islands in promoters where the DNA is methylated at position 5 of cytosine within CpG dinucleotides. May directly affect chromatin structure by inducing intra- and inter- chromatin compaction via bridging over multiple methylated CpG sites. Acts as an anti-silencing factor that prevents DNA hypermethylation and gene repression. Requires high mCG density for binding. Recognizes preferentially mCGs located in transposable elements. Required for active DNA demethylation. Prefers to target genomic loci around chromocenters. The chain is Methyl-CpG-binding domain-containing protein 7 from Arabidopsis thaliana (Mouse-ear cress).